Here is a 237-residue protein sequence, read N- to C-terminus: Large ribosomal subunit protein uL2 (237 aa).

The segment at 202–237 (FGGGNRKHPGKPTTVSRNAPPGRKVGHIAARRTGKR) is disordered. Basic residues predominate over residues 225–237 (KVGHIAARRTGKR).

This sequence belongs to the universal ribosomal protein uL2 family. In terms of assembly, part of the 50S ribosomal subunit. Forms a bridge to the 30S subunit in the 70S ribosome.

Functionally, one of the primary rRNA binding proteins. Required for association of the 30S and 50S subunits to form the 70S ribosome, for tRNA binding and peptide bond formation. It has been suggested to have peptidyltransferase activity; this is somewhat controversial. Makes several contacts with the 16S rRNA in the 70S ribosome. In Methanococcoides burtonii (strain DSM 6242 / NBRC 107633 / OCM 468 / ACE-M), this protein is Large ribosomal subunit protein uL2.